Here is a 186-residue protein sequence, read N- to C-terminus: MLILLDQNGVLADFEHAFIDAWRKRHPDIEPVAFEDRKSFHIREDYAPELRGLAEAIYTAPGFIRDLPPVPGAIEAFRELLALGMDVRICSSPLMQFENYVAEKYLWVERHLGREATQRLILTRDKTLVQGDLLIDDRPVITGAARPRWRHIIYDAPYNRDQTDRPRLDWRNWRNVLAGELYRSDA.

This sequence belongs to the 5'(3')-deoxyribonucleotidase family. Mg(2+) is required as a cofactor.

Dephosphorylates the 5' and 2'(3')-phosphates of deoxyribonucleotides. The sequence is that of Putative 5'(3')-deoxyribonucleotidase from Bordetella parapertussis (strain 12822 / ATCC BAA-587 / NCTC 13253).